The chain runs to 367 residues: Dihydroorotate dehydrogenase (quinone) (367 aa).

FMN contacts are provided by residues 61–65 and threonine 85; that span reads AGFDK. Lysine 65 contributes to the substrate binding site. 110–114 is a binding site for substrate; it reads NRMGF. 2 residues coordinate FMN: asparagine 138 and asparagine 169. A substrate-binding site is contributed by asparagine 169. Serine 172 (nucleophile) is an active-site residue. Asparagine 174 serves as a coordination point for substrate. Positions 212 and 240 each coordinate FMN. A substrate-binding site is contributed by 241–242; the sequence is NT. Residues glycine 263, glycine 292, and 313 to 314 contribute to the FMN site; that span reads YS.

Belongs to the dihydroorotate dehydrogenase family. Type 2 subfamily. As to quaternary structure, monomer. FMN serves as cofactor.

It is found in the cell membrane. The enzyme catalyses (S)-dihydroorotate + a quinone = orotate + a quinol. Its pathway is pyrimidine metabolism; UMP biosynthesis via de novo pathway; orotate from (S)-dihydroorotate (quinone route): step 1/1. Its function is as follows. Catalyzes the conversion of dihydroorotate to orotate with quinone as electron acceptor. In Rhodospirillum rubrum (strain ATCC 11170 / ATH 1.1.1 / DSM 467 / LMG 4362 / NCIMB 8255 / S1), this protein is Dihydroorotate dehydrogenase (quinone).